The primary structure comprises 191 residues: uncharacterized protein (191 aa).

Positions 5–65 constitute an HTH tetR-type domain; that stretch reads GDSREKILHT…IEAVTYTGKI (61 aa). A DNA-binding region (H-T-H motif) is located at residues 28-47; it reads GLNQIVKESGAPKGSLYHFF.

This is an uncharacterized protein from Bacillus subtilis (strain 168).